A 194-amino-acid chain; its full sequence is NADH-quinone oxidoreductase subunit B (194 aa).

[4Fe-4S] cluster is bound by residues Cys-73, Cys-74, Cys-138, and Cys-168.

It belongs to the complex I 20 kDa subunit family. As to quaternary structure, NDH-1 is composed of 14 different subunits. Subunits NuoB, C, D, E, F, and G constitute the peripheral sector of the complex. The cofactor is [4Fe-4S] cluster.

The protein localises to the cell inner membrane. It carries out the reaction a quinone + NADH + 5 H(+)(in) = a quinol + NAD(+) + 4 H(+)(out). Functionally, NDH-1 shuttles electrons from NADH, via FMN and iron-sulfur (Fe-S) centers, to quinones in the respiratory chain. The immediate electron acceptor for the enzyme in this species is believed to be ubiquinone. Couples the redox reaction to proton translocation (for every two electrons transferred, four hydrogen ions are translocated across the cytoplasmic membrane), and thus conserves the redox energy in a proton gradient. The sequence is that of NADH-quinone oxidoreductase subunit B from Rhizobium johnstonii (strain DSM 114642 / LMG 32736 / 3841) (Rhizobium leguminosarum bv. viciae).